A 301-amino-acid chain; its full sequence is MSLSRLSSPQTFSRVFIVARGAATGHAVAPSSDNSIGYFEKIAYRFKGIPLPTETEAPKSMFDACNKEWSAPELLPSVPKDFKEHPDRDLTNYPYPSRPMYPPKTRLLMMPDSWFTAFQKVTGTSGPYLFFGGLFAFLVNKELWVFEEQGHMTVGWILFYLLVSRTAGYKIDAGLYKDYQERVGFFKGLIQEDLKEAVDFRKTSAAQTASFAALKEGMPTSLKDSMQLQLEAAYRKNVQTISNEIKRRIEYLKETEETKARFERDQLLKLINDSVEKQVSQKDFQEKFLQNAIQQLKGIAV.

The N-terminal 21 residues, 1 to 21 (MSLSRLSSPQTFSRVFIVARG), are a transit peptide targeting the mitochondrion.

Belongs to the eukaryotic ATPase B chain family. In terms of assembly, subunit of the F-type ATPase which has 2 components, CF(1) - the catalytic core - and CF(0) - the membrane proton channel.

It is found in the mitochondrion. Its subcellular location is the mitochondrion inner membrane. Mitochondrial membrane ATP synthase (F(1)F(0) ATP synthase or Complex V) produces ATP from ADP in the presence of a proton gradient across the membrane which is generated by electron transport complexes of the respiratory chain. F-type ATPases consist of two structural domains, F(1) - containing the extramembraneous catalytic core, and F(0) - containing the membrane proton channel, linked together by a central stalk and a peripheral stalk. During catalysis, ATP synthesis in the catalytic domain of F(1) is coupled via a rotary mechanism of the central stalk subunits to proton translocation. Part of the complex F(0) domain and the peripheric stalk, which acts as a stator to hold the subunits of the catalytic subcomplexes relative to the rotary elements. Plays a role in germline development. The polypeptide is ATP synthase F(0) complex subunit B1, mitochondrial (Caenorhabditis elegans).